Here is a 464-residue protein sequence, read N- to C-terminus: NADH-quinone oxidoreductase subunit N (464 aa).

Helical transmembrane passes span 5-25 (MLLA…VLFL), 31-51 (LLSA…PASL), 63-83 (LFAR…CLLS), 96-116 (EYAA…ASTS), 117-137 (LVSL…LIAV), 152-172 (LLPG…VYAA), 188-208 (GAPM…AAAF), 242-262 (VFAV…RPLL), 286-303 (MLAY…LAVL), 312-332 (AGLF…GLLA), 358-378 (AVLL…AGFM), 393-415 (VGLV…RPVL), and 436-456 (LIFV…GPFF).

The protein belongs to the complex I subunit 2 family. In terms of assembly, NDH-1 is composed of 14 different subunits. Subunits NuoA, H, J, K, L, M, N constitute the membrane sector of the complex.

Its subcellular location is the cell inner membrane. The catalysed reaction is a quinone + NADH + 5 H(+)(in) = a quinol + NAD(+) + 4 H(+)(out). NDH-1 shuttles electrons from NADH, via FMN and iron-sulfur (Fe-S) centers, to quinones in the respiratory chain. The immediate electron acceptor for the enzyme in this species is believed to be ubiquinone. Couples the redox reaction to proton translocation (for every two electrons transferred, four hydrogen ions are translocated across the cytoplasmic membrane), and thus conserves the redox energy in a proton gradient. The protein is NADH-quinone oxidoreductase subunit N of Syntrophotalea carbinolica (strain DSM 2380 / NBRC 103641 / GraBd1) (Pelobacter carbinolicus).